A 642-amino-acid polypeptide reads, in one-letter code: Stress-activated map kinase-interacting protein 1 homolog (642 aa).

Positions 189-314 (ARIREVIGYC…EREPLFQGLL (126 aa)) constitute a CRIM domain. Residues 603-642 (IVSPSSDAPSRSSNGKNGGKFRKMSSLMASVMGRRKSDSK) form a disordered region. A compositionally biased stretch (low complexity) spans 605–615 (SPSSDAPSRSS).

Belongs to the SIN1 family. As to quaternary structure, component of the target of rapamycin complex 2 (TORC2).

Component of the target of rapamycin complex 2 (TORC2), which transduces signals from growth factors to pathways involved in proliferation, cytoskeletal organization and anabolic output. In response to growth factors, TORC2 phosphorylates and activates AGC protein kinase family members, such as Akt1. Within the TORC2 complex, sinh-1 acts as a substrate adapter which recognizes and binds AGC protein kinase family members for phosphorylation by mTor. The protein is Stress-activated map kinase-interacting protein 1 homolog (sinh-1) of Caenorhabditis elegans.